Consider the following 252-residue polypeptide: Octanoyltransferase (252 aa).

The 182-residue stretch at 56–237 (ADTGDEIWLV…RLIANLDGAS (182 aa)) folds into the BPL/LPL catalytic domain. Residues 96-103 (RGGQITYH), 168-170 (ALG), and 181-183 (GLS) contribute to the substrate site. Cysteine 199 serves as the catalytic Acyl-thioester intermediate.

The protein belongs to the LipB family.

It is found in the cytoplasm. It catalyses the reaction octanoyl-[ACP] + L-lysyl-[protein] = N(6)-octanoyl-L-lysyl-[protein] + holo-[ACP] + H(+). It functions in the pathway protein modification; protein lipoylation via endogenous pathway; protein N(6)-(lipoyl)lysine from octanoyl-[acyl-carrier-protein]: step 1/2. Functionally, catalyzes the transfer of endogenously produced octanoic acid from octanoyl-acyl-carrier-protein onto the lipoyl domains of lipoate-dependent enzymes. Lipoyl-ACP can also act as a substrate although octanoyl-ACP is likely to be the physiological substrate. This Burkholderia lata (strain ATCC 17760 / DSM 23089 / LMG 22485 / NCIMB 9086 / R18194 / 383) protein is Octanoyltransferase.